We begin with the raw amino-acid sequence, 130 residues long: Ribonuclease P protein component 2 (130 aa).

The protein belongs to the eukaryotic/archaeal RNase P protein component 2 family. As to quaternary structure, consists of a catalytic RNA component and at least 4-5 protein subunits.

It is found in the cytoplasm. The enzyme catalyses Endonucleolytic cleavage of RNA, removing 5'-extranucleotides from tRNA precursor.. In terms of biological role, part of ribonuclease P, a protein complex that generates mature tRNA molecules by cleaving their 5'-ends. This is Ribonuclease P protein component 2 from Methanococcus maripaludis (strain C6 / ATCC BAA-1332).